Consider the following 352-residue polypeptide: Molybdenum import ATP-binding protein ModC (352 aa).

Residues methionine 1–glutamate 229 enclose the ABC transporter domain. Glycine 31 to threonine 38 lines the ATP pocket. In terms of domain architecture, Mop spans glutamine 289–alanine 352.

The protein belongs to the ABC transporter superfamily. Molybdate importer (TC 3.A.1.8) family. As to quaternary structure, the complex is composed of two ATP-binding proteins (ModC), two transmembrane proteins (ModB) and a solute-binding protein (ModA).

The protein resides in the cell inner membrane. It carries out the reaction molybdate(out) + ATP + H2O = molybdate(in) + ADP + phosphate + H(+). Part of the ABC transporter complex ModABC involved in molybdenum import. Responsible for energy coupling to the transport system. This chain is Molybdenum import ATP-binding protein ModC, found in Escherichia coli O6:H1 (strain CFT073 / ATCC 700928 / UPEC).